Consider the following 545-residue polypeptide: Membrane protein insertase YidC (545 aa).

A run of 6 helical transmembrane segments spans residues 10–30 (AIYLSLFFIGIFMIIDDIFFS), 319–339 (LLYFIQVPMQLIMQIFYNVIP), 341–361 (WGLSIMFLTIVVRILIFPLTF), 407–427 (LGGCFPILLQLPVFFALYGLV), 467–487 (ILPFIMMVTQLISTIISSNVS), and 502–522 (MPIMFFFILYDMPSGLLIYWI).

This sequence belongs to the OXA1/ALB3/YidC family. Type 1 subfamily. In terms of assembly, interacts with the Sec translocase complex via SecD. Specifically interacts with transmembrane segments of nascent integral membrane proteins during membrane integration.

The protein resides in the cell inner membrane. In terms of biological role, required for the insertion and/or proper folding and/or complex formation of integral membrane proteins into the membrane. Involved in integration of membrane proteins that insert both dependently and independently of the Sec translocase complex, as well as at least some lipoproteins. Aids folding of multispanning membrane proteins. The sequence is that of Membrane protein insertase YidC from Borrelia hermsii (strain HS1 / DAH).